A 153-amino-acid polypeptide reads, in one-letter code: Small ribosomal subunit protein uS13 (153 aa).

Belongs to the universal ribosomal protein uS13 family.

The protein localises to the cytoplasm. Its function is as follows. Located at the top of the head of the 40S subunit, it contacts several helices of the 18S rRNA. This chain is Small ribosomal subunit protein uS13 (RPS18), found in Chlamydomonas reinhardtii (Chlamydomonas smithii).